The chain runs to 500 residues: Probable cytosol aminopeptidase (500 aa).

Residues Lys-265 and Asp-270 each contribute to the Mn(2+) site. The active site involves Lys-277. Residues Asp-288, Asp-347, and Glu-349 each coordinate Mn(2+). The active site involves Arg-351.

This sequence belongs to the peptidase M17 family. Mn(2+) is required as a cofactor.

The protein resides in the cytoplasm. It carries out the reaction Release of an N-terminal amino acid, Xaa-|-Yaa-, in which Xaa is preferably Leu, but may be other amino acids including Pro although not Arg or Lys, and Yaa may be Pro. Amino acid amides and methyl esters are also readily hydrolyzed, but rates on arylamides are exceedingly low.. It catalyses the reaction Release of an N-terminal amino acid, preferentially leucine, but not glutamic or aspartic acids.. In terms of biological role, presumably involved in the processing and regular turnover of intracellular proteins. Catalyzes the removal of unsubstituted N-terminal amino acids from various peptides. The chain is Probable cytosol aminopeptidase from Bdellovibrio bacteriovorus (strain ATCC 15356 / DSM 50701 / NCIMB 9529 / HD100).